The sequence spans 360 residues: Phenylalanine--tRNA ligase alpha subunit (360 aa).

Residue Glu260 coordinates Mg(2+).

The protein belongs to the class-II aminoacyl-tRNA synthetase family. Phe-tRNA synthetase alpha subunit type 1 subfamily. As to quaternary structure, tetramer of two alpha and two beta subunits. Requires Mg(2+) as cofactor.

It is found in the cytoplasm. The catalysed reaction is tRNA(Phe) + L-phenylalanine + ATP = L-phenylalanyl-tRNA(Phe) + AMP + diphosphate + H(+). This Beijerinckia indica subsp. indica (strain ATCC 9039 / DSM 1715 / NCIMB 8712) protein is Phenylalanine--tRNA ligase alpha subunit.